The sequence spans 440 residues: Xylose isomerase (440 aa).

Residues histidine 100 and aspartate 103 contribute to the active site. Mg(2+) contacts are provided by glutamate 231, glutamate 267, histidine 270, aspartate 295, aspartate 306, aspartate 308, and aspartate 338.

The protein belongs to the xylose isomerase family. As to quaternary structure, homotetramer. It depends on Mg(2+) as a cofactor.

Its subcellular location is the cytoplasm. It catalyses the reaction alpha-D-xylose = alpha-D-xylulofuranose. This chain is Xylose isomerase, found in Paraburkholderia xenovorans (strain LB400).